The chain runs to 496 residues: Nucleolar and spindle-associated protein 1-B (496 aa).

3 disordered regions span residues 44–206 (YPES…HEAH), 250–294 (TPVS…STAN), and 338–496 (KSSS…VPVK). Residues 56–69 (GCTSLTDTDELNSS) show a composition bias toward polar residues. The segment covering 121–134 (TQDKDCLESKKKEV) has biased composition (basic and acidic residues). A compositionally biased stretch (polar residues) spans 150-159 (QDTSKQNNSE). The segment covering 261–281 (SRLSLLSPLPRTTGASPSRTP) has biased composition (low complexity). 2 stretches are compositionally biased toward polar residues: residues 376–396 (NTTIQPSPAITESPCQQNKAN) and 403–423 (AQNTETPNTNKKGSFDLQASL). Over residues 447–459 (SGSNSNVSVLKNN) the composition is skewed to low complexity. Residues 467-485 (TREERRKQHELDRKGKRDQ) are compositionally biased toward basic and acidic residues.

It belongs to the NUSAP family. Interacts with DNA, microtubules, ipo7, kpna2 and kpnb1. Microtubule stabilization is inhibited by ipo7 and kpna2, while microtubule bundling is inhibited by kpnb1. Active GTP-bound ran causes dissociation of ipo7 and kpnb1.

The protein resides in the cytoplasm. Its subcellular location is the nucleus. It is found in the cytoskeleton. The protein localises to the spindle. Functionally, microtubule-associated protein with the capacity to bundle and stabilize microtubules. May associate with chromosomes and promote the organization of meiotic or mitotic spindle microtubules around them. This Xenopus laevis (African clawed frog) protein is Nucleolar and spindle-associated protein 1-B (nusap1-b).